Consider the following 492-residue polypeptide: Glutamyl-tRNA(Gln) amidotransferase subunit B, mitochondrial (492 aa).

Belongs to the GatB/GatE family. GatB subfamily. Subunit of the heterotrimeric GatFAB amidotransferase (AdT) complex, composed of A, B and F subunits.

It localises to the mitochondrion. It carries out the reaction L-glutamyl-tRNA(Gln) + L-glutamine + ATP + H2O = L-glutaminyl-tRNA(Gln) + L-glutamate + ADP + phosphate + H(+). Its function is as follows. Allows the formation of correctly charged Gln-tRNA(Gln) through the transamidation of misacylated Glu-tRNA(Gln) in the mitochondria. The reaction takes place in the presence of glutamine and ATP through an activated gamma-phospho-Glu-tRNA(Gln). This is Glutamyl-tRNA(Gln) amidotransferase subunit B, mitochondrial from Komagataella phaffii (strain GS115 / ATCC 20864) (Yeast).